We begin with the raw amino-acid sequence, 150 residues long: Glycine cleavage system H-like protein gcvH2 (150 aa).

Positions 44 to 126 (VATVGLSSFG…PANNWMVKFK (83 aa)) constitute a Lipoyl-binding domain.

Belongs to the GcvH family.

The protein is Glycine cleavage system H-like protein gcvH2 (gcvH2) of Dictyostelium discoideum (Social amoeba).